The sequence spans 135 residues: MSLQVCVMTPERIFWNGQSEEIILPTNTGEMGVLKNHAPIITGLDVGAMLIRTEKGWTSVAIMGGFGIVGQNRVILLVNEAESADTINAEQAESDFNSAKEKLEQAQSTKQRVEANTQFKRAKARYQVVKNLSKA.

Belongs to the ATPase epsilon chain family. As to quaternary structure, F-type ATPases have 2 components, CF(1) - the catalytic core - and CF(0) - the membrane proton channel. CF(1) has five subunits: alpha(3), beta(3), gamma(1), delta(1), epsilon(1). CF(0) has three main subunits: a, b and c.

Its subcellular location is the plastid. It localises to the chloroplast thylakoid membrane. Its function is as follows. Produces ATP from ADP in the presence of a proton gradient across the membrane. This is ATP synthase epsilon chain, chloroplastic from Stigeoclonium helveticum (Green alga).